A 355-amino-acid polypeptide reads, in one-letter code: Glucose-1-phosphate thymidylyltransferase (355 aa).

Mg(2+)-binding residues include Asp107 and Asp220.

It belongs to the glucose-1-phosphate thymidylyltransferase family. The cofactor is Mg(2+).

The catalysed reaction is dTTP + alpha-D-glucose 1-phosphate + H(+) = dTDP-alpha-D-glucose + diphosphate. Its pathway is antibiotic biosynthesis; streptomycin biosynthesis. In terms of biological role, involved in the biosynthesis of the streptose moiety of streptomycin. Catalyzes the formation of dTDP-glucose, from dTTP and glucose 1-phosphate, as well as its pyrophosphorolysis. This chain is Glucose-1-phosphate thymidylyltransferase (strD), found in Streptomyces griseus.